The sequence spans 463 residues: NF-kappa-B-activating protein (463 aa).

A compositionally biased stretch (basic residues) spans 1-14; the sequence is MRSRSRSRSRQRER. Residues 1-358 form a disordered region; that stretch reads MRSRSRSRSR…GGSLNQKDFG (358 aa). 2 stretches are compositionally biased toward basic and acidic residues: residues 15-29 and 39-71; these read RRSD…ERRT and VSRE…DAVP. Low complexity predominate over residues 78–98; the sequence is SSPSRSSSSSSSDRSSSSRSP. Residues 107–125 are compositionally biased toward basic and acidic residues; sequence KSVERWPNDRYHENNDRRQ. A phosphoserine mark is found at serine 136, serine 189, and serine 191. Threonine 195 carries the post-translational modification Phosphothreonine. Residues 208-238 show a composition bias toward basic residues; that stretch reads PKKKKKKGKRKHKKSEKKSKKKSKKSKKKKS. Residues 241-267 are compositionally biased toward low complexity; it reads ESSSSSSSSSSEDSSDESSSSSSSSSS. Positions 268-278 are enriched in acidic residues; the sequence is DSEDESEEEDV. Residues 279-288 are compositionally biased toward basic and acidic residues; the sequence is WLEKTADGIK. Basic residues predominate over residues 289–312; that stretch reads KPKKKKSSTSKKDKKSKKKKKKRK. Over residues 330–340 the composition is skewed to basic and acidic residues; sequence KNKESASHNDE.

It belongs to the NKAP family.

It is found in the nucleus. Its function is as follows. Tumor suppressor involved in maintaining genome integrity. Influences gene expression and mRNA splicing. The sequence is that of NF-kappa-B-activating protein from Drosophila melanogaster (Fruit fly).